Reading from the N-terminus, the 180-residue chain is 3-hydroxyanthranilate 3,4-dioxygenase (180 aa).

Arg46 is a binding site for O2. Residues His50, Glu56, and His94 each contribute to the Fe cation site. Position 56 (Glu56) interacts with substrate. The substrate site is built by Arg98 and Glu109. Positions 124, 127, 161, and 164 each coordinate Fe cation.

Belongs to the 3-HAO family. As to quaternary structure, homodimer. Fe(2+) is required as a cofactor.

It catalyses the reaction 3-hydroxyanthranilate + O2 = (2Z,4Z)-2-amino-3-carboxymuconate 6-semialdehyde. Its pathway is cofactor biosynthesis; NAD(+) biosynthesis; quinolinate from L-kynurenine: step 3/3. Its function is as follows. Catalyzes the oxidative ring opening of 3-hydroxyanthranilate to 2-amino-3-carboxymuconate semialdehyde, which spontaneously cyclizes to quinolinate. In Ruegeria pomeroyi (strain ATCC 700808 / DSM 15171 / DSS-3) (Silicibacter pomeroyi), this protein is 3-hydroxyanthranilate 3,4-dioxygenase.